The primary structure comprises 333 residues: 4-hydroxyproline 2-epimerase (333 aa).

The active-site Proton acceptor is the C90. Substrate contacts are provided by residues 91–92, H223, and D249; that span reads GH. C253 (proton donor) is an active-site residue. 254–255 provides a ligand contact to substrate; the sequence is GT.

This sequence belongs to the proline racemase family.

It catalyses the reaction trans-4-hydroxy-L-proline = cis-4-hydroxy-D-proline. Catalyzes the epimerization of trans-4-hydroxy-L-proline (t4LHyp) to cis-4-hydroxy-D-proline (c4DHyp). May be involved in a degradation pathway of t4LHyp, which would allow S.novella to grow on t4LHyp as a sole carbon source. This is 4-hydroxyproline 2-epimerase from Ancylobacter novellus (strain ATCC 8093 / DSM 506 / JCM 20403 / CCM 1077 / IAM 12100 / NBRC 12443 / NCIMB 10456) (Starkeya novella).